We begin with the raw amino-acid sequence, 375 residues long: Phytanoyl-CoA hydroxylase-interacting protein-like (375 aa).

Phosphoserine is present on residues S11, S12, and S15. N-linked (GlcNAc...) asparagine glycosylation is present at N22. Position 24 is a phosphoserine (S24). Residue N36 is glycosylated (N-linked (GlcNAc...) asparagine). Residues 51–160 (VPHNIKINNI…EIIEFCTADY (110 aa)) enclose the Fibronectin type-III domain.

Belongs to the PHYHIP family.

In terms of biological role, may play a role in the development of the central system. In Rattus norvegicus (Rat), this protein is Phytanoyl-CoA hydroxylase-interacting protein-like (Phyhipl).